A 395-amino-acid chain; its full sequence is Succinyl-diaminopimelate desuccinylase (395 aa).

His-74 provides a ligand contact to Zn(2+). The active site involves Asp-76. Residue Asp-107 participates in Zn(2+) binding. The Proton acceptor role is filled by Glu-141. Zn(2+) contacts are provided by Glu-142, Glu-170, and His-368.

The protein belongs to the peptidase M20A family. DapE subfamily. In terms of assembly, homodimer. Requires Zn(2+) as cofactor. The cofactor is Co(2+).

The enzyme catalyses N-succinyl-(2S,6S)-2,6-diaminopimelate + H2O = (2S,6S)-2,6-diaminopimelate + succinate. It participates in amino-acid biosynthesis; L-lysine biosynthesis via DAP pathway; LL-2,6-diaminopimelate from (S)-tetrahydrodipicolinate (succinylase route): step 3/3. In terms of biological role, catalyzes the hydrolysis of N-succinyl-L,L-diaminopimelic acid (SDAP), forming succinate and LL-2,6-diaminopimelate (DAP), an intermediate involved in the bacterial biosynthesis of lysine and meso-diaminopimelic acid, an essential component of bacterial cell walls. The chain is Succinyl-diaminopimelate desuccinylase from Chelativorans sp. (strain BNC1).